The following is a 506-amino-acid chain: U3 small nucleolar RNA-associated protein 18 homolog (506 aa).

Over residues 1–11 (MSSDESSDGLE) the composition is skewed to acidic residues. 2 disordered regions span residues 1–44 (MSSD…SQAK) and 69–126 (AKSV…PLNH). Residues 24 to 37 (EQEKPAKIKRERYI) are compositionally biased toward basic and acidic residues. Serine 102, serine 104, serine 164, and serine 165 each carry phosphoserine. WD repeat units lie at residues 203–242 (YAEGNATSIQFHPTSTAALVAGMNGLATIYAVDGQKNERL), 331–370 (KQEGKVKGFTWSSDSKRILVCGSTSNVSVLNLRQNLIEHI), 372–413 (MDDG…ASKA), and 469–505 (EKVGFVTSMAFSPHSSFLAFATKGKQVPLFRLKYFKG).

It belongs to the WD repeat UTP18 family. As to quaternary structure, component of U3 snoRNP complex.

Its subcellular location is the nucleus. The protein resides in the nucleolus. In terms of biological role, component of a nucleolar small nuclear ribonucleoprotein particle (snoRNP) thought to participate in the processing and modification of pre-ribosomal RNA. Regulation of cell size by ribosome synthesis is an important parameter for stem cell maintenance and function. The chain is U3 small nucleolar RNA-associated protein 18 homolog (wcd) from Drosophila melanogaster (Fruit fly).